The sequence spans 384 residues: tRNA-specific 2-thiouridylase MnmA (384 aa).

ATP is bound by residues G9–S16 and M35. The segment at N95 to D97 is interaction with target base in tRNA. Catalysis depends on C100, which acts as the Nucleophile. The cysteines at positions 100 and 196 are disulfide-linked. Residue G124 participates in ATP binding. The interval K146 to Q148 is interaction with tRNA. Catalysis depends on C196, which acts as the Cysteine persulfide intermediate. The tract at residues R308–Y309 is interaction with tRNA.

It belongs to the MnmA/TRMU family.

The protein localises to the cytoplasm. The catalysed reaction is S-sulfanyl-L-cysteinyl-[protein] + uridine(34) in tRNA + AH2 + ATP = 2-thiouridine(34) in tRNA + L-cysteinyl-[protein] + A + AMP + diphosphate + H(+). Catalyzes the 2-thiolation of uridine at the wobble position (U34) of tRNA, leading to the formation of s(2)U34. In Burkholderia ambifaria (strain ATCC BAA-244 / DSM 16087 / CCUG 44356 / LMG 19182 / AMMD) (Burkholderia cepacia (strain AMMD)), this protein is tRNA-specific 2-thiouridylase MnmA.